The chain runs to 146 residues: Large ribosomal subunit protein uL15 (146 aa).

Basic and acidic residues predominate over residues 1-18; that stretch reads MKLHELKPAEGSRKERNR. The interval 1-54 is disordered; sequence MKLHELKPAEGSRKERNRVGRGVATGNGKTSGRGHKGQKARSGGGVRPGFEGGQ. Residues 42-52 are compositionally biased toward gly residues; the sequence is SGGGVRPGFEG.

It belongs to the universal ribosomal protein uL15 family. As to quaternary structure, part of the 50S ribosomal subunit.

Its function is as follows. Binds to the 23S rRNA. In Staphylococcus aureus (strain Mu3 / ATCC 700698), this protein is Large ribosomal subunit protein uL15.